We begin with the raw amino-acid sequence, 91 residues long: MELKILEKSDDEMKMEIAGESHTLLNMLKIILLEDERVHTASYDMKHVTISEPVLFIKTENADPIDVVKAAVAKLITECEEFVTVFNKAVE.

This sequence belongs to the archaeal Rpo11/eukaryotic RPB11/RPC19 RNA polymerase subunit family. Part of the RNA polymerase complex.

The protein localises to the cytoplasm. The enzyme catalyses RNA(n) + a ribonucleoside 5'-triphosphate = RNA(n+1) + diphosphate. Functionally, DNA-dependent RNA polymerase (RNAP) catalyzes the transcription of DNA into RNA using the four ribonucleoside triphosphates as substrates. The protein is DNA-directed RNA polymerase subunit Rpo11 of Methanococcoides burtonii (strain DSM 6242 / NBRC 107633 / OCM 468 / ACE-M).